Reading from the N-terminus, the 377-residue chain is N-acetyldiaminopimelate deacetylase (377 aa).

Asp-69 is an active-site residue. Glu-128 acts as the Proton acceptor in catalysis.

It belongs to the peptidase M20A family. N-acetyldiaminopimelate deacetylase subfamily.

It catalyses the reaction N-acetyl-(2S,6S)-2,6-diaminopimelate + H2O = (2S,6S)-2,6-diaminopimelate + acetate. It functions in the pathway amino-acid biosynthesis; L-lysine biosynthesis via DAP pathway; LL-2,6-diaminopimelate from (S)-tetrahydrodipicolinate (acetylase route): step 3/3. Catalyzes the conversion of N-acetyl-diaminopimelate to diaminopimelate and acetate. The protein is N-acetyldiaminopimelate deacetylase of Streptococcus gordonii (strain Challis / ATCC 35105 / BCRC 15272 / CH1 / DL1 / V288).